We begin with the raw amino-acid sequence, 333 residues long: Galactinol synthase 5 (333 aa).

The active site involves Lys103. Residues Asp119, Asp121, and His257 each contribute to the Mn(2+) site.

It belongs to the glycosyltransferase 8 family. Galactosyltransferase subfamily. Requires a divalent metal cation as cofactor.

The protein localises to the cytoplasm. The catalysed reaction is myo-inositol + UDP-alpha-D-galactose = alpha-D-galactosyl-(1-&gt;3)-1D-myo-inositol + UDP + H(+). Functionally, galactinol synthase involved in the biosynthesis of raffinose family oligosaccharides (RFOs) that function as osmoprotectants. May promote plant stress tolerance. In Arabidopsis thaliana (Mouse-ear cress), this protein is Galactinol synthase 5 (GOLS5).